Here is a 206-residue protein sequence, read N- to C-terminus: uncharacterized protein (206 aa).

A signal peptide spans 1–18 (MSSLVLIPCALLTQGIYA).

This is an uncharacterized protein from Acanthamoeba polyphaga mimivirus (APMV).